Reading from the N-terminus, the 459-residue chain is Ribulose bisphosphate carboxylase large chain (459 aa).

Residues 1 to 2 (MS) constitute a propeptide that is removed on maturation. N-acetylproline is present on Pro3. Lys14 bears the N6,N6,N6-trimethyllysine mark. Residues Xaa123 and Thr173 each coordinate substrate. Catalysis depends on Lys175, which acts as the Proton acceptor. Residue Lys177 participates in substrate binding. 3 residues coordinate Mg(2+): Lys201, Asp203, and Glu204. The residue at position 201 (Lys201) is an N6-carboxylysine. The active-site Proton acceptor is the His294. Substrate-binding residues include Arg295, His327, and Ser379.

Belongs to the RuBisCO large chain family. Type I subfamily. As to quaternary structure, heterohexadecamer of 8 large chains and 8 small chains; disulfide-linked. The disulfide link is formed within the large subunit homodimers. Mg(2+) serves as cofactor. Post-translationally, the disulfide bond which can form in the large chain dimeric partners within the hexadecamer appears to be associated with oxidative stress and protein turnover.

Its subcellular location is the plastid. It is found in the chloroplast. It carries out the reaction 2 (2R)-3-phosphoglycerate + 2 H(+) = D-ribulose 1,5-bisphosphate + CO2 + H2O. The catalysed reaction is D-ribulose 1,5-bisphosphate + O2 = 2-phosphoglycolate + (2R)-3-phosphoglycerate + 2 H(+). RuBisCO catalyzes two reactions: the carboxylation of D-ribulose 1,5-bisphosphate, the primary event in carbon dioxide fixation, as well as the oxidative fragmentation of the pentose substrate in the photorespiration process. Both reactions occur simultaneously and in competition at the same active site. This chain is Ribulose bisphosphate carboxylase large chain, found in Corynocarpus laevigatus (New Zealand laurel).